A 564-amino-acid chain; its full sequence is Mercuric reductase (564 aa).

Positions 1–65 (MSTLKITGMT…AVAGLGYRAT (65 aa)) constitute an HMA domain. 2 residues coordinate a metal cation: Cys11 and Cys14. 3 residues coordinate FAD: Ala109, Gly129, and Thr134. A disulfide bridge connects residues Cys135 and Cys140. FAD is bound by residues Lys144, Ala210, Asp406, and Val414. Hg(2+) is bound by residues Cys561 and Cys562.

The protein belongs to the class-I pyridine nucleotide-disulfide oxidoreductase family. In terms of assembly, homodimer. It depends on FAD as a cofactor.

The enzyme catalyses Hg + NADP(+) + H(+) = Hg(2+) + NADPH. Resistance to Hg(2+) in bacteria appears to be governed by a specialized system which includes mercuric reductase. MerA protein is responsible for volatilizing mercury as Hg(0). In Shigella flexneri, this protein is Mercuric reductase (merA).